The following is a 271-amino-acid chain: Endonuclease V (271 aa).

The disordered stretch occupies residues 46–67; the sequence is TRTGDAPDVDQTTLSTSADDRT. Mg(2+) contacts are provided by aspartate 76 and aspartate 140.

This sequence belongs to the endonuclease V family. It depends on Mg(2+) as a cofactor.

Its subcellular location is the cytoplasm. It carries out the reaction Endonucleolytic cleavage at apurinic or apyrimidinic sites to products with a 5'-phosphate.. DNA repair enzyme involved in the repair of deaminated bases. Selectively cleaves double-stranded DNA at the second phosphodiester bond 3' to a deoxyinosine leaving behind the intact lesion on the nicked DNA. The protein is Endonuclease V of Haloarcula marismortui (strain ATCC 43049 / DSM 3752 / JCM 8966 / VKM B-1809) (Halobacterium marismortui).